Consider the following 554-residue polypeptide: Wee1-like protein kinase 2-C (554 aa).

2 disordered regions span residues Met-1–Cys-86 and Thr-145–Lys-183. 2 stretches are compositionally biased toward polar residues: residues Ser-38–Cys-48 and Val-147–Gln-163. Residues Phe-213 to Val-487 enclose the Protein kinase domain. ATP is bound by residues Ile-219–Val-227 and Lys-242. The active-site Proton acceptor is the Asp-340. Residues Asn-345 and Asp-377 each contribute to the Mg(2+) site. Residues Ala-490–Leu-516 are a coiled coil.

This sequence belongs to the protein kinase superfamily. Ser/Thr protein kinase family. WEE1 subfamily.

The protein localises to the nucleus. It catalyses the reaction L-tyrosyl-[protein] + ATP = O-phospho-L-tyrosyl-[protein] + ADP + H(+). Protein tyrosine kinase that phosphorylates and inhibits cdk1 and acts as a regulator of meiosis in oocytes. Required to ensure the meiotic cell cycle in oocytes by phosphorylating cdk1 at 'Tyr-15', leading to inhibit cdk1 activity and prevent meiosis. The protein is Wee1-like protein kinase 2-C (wee2-c) of Xenopus laevis (African clawed frog).